Consider the following 140-residue polypeptide: Mercuric transport protein MerC (140 aa).

The Cytoplasmic segment spans residues 2 to 10; it reads GLMTRIADK. The helical transmembrane segment at 11–31 threads the bilayer; that stretch reads TGALGSVVSAMGCAACFPALA. Hg(2+) is bound by residues G22 and A25. The Periplasmic segment spans residues 32-46; it reads SFGAAIGLGFLSQYE. Residues 47–67 form a helical membrane-spanning segment; that stretch reads GLFISRLLPLFAALAFLANAL. Topologically, residues 68–78 are cytoplasmic; sequence GWFSHRQWLRS. The helical transmembrane segment at 79 to 99 threads the bilayer; sequence LLGMIGPAIVFAATVWLLGNW. Residues 100–106 are Periplasmic-facing; sequence WTANLMY. The chain crosses the membrane as a helical span at residues 107-127; sequence VGLALMIGVSIWDFVSPAHRR. Residues 128 to 140 are Cytoplasmic-facing; that stretch reads CGPDGCELPAKRL.

The protein resides in the cell inner membrane. With respect to regulation, uptake of Hg(2+) is decreased by iodoacetamide and iodoacetate, and is completely inhibited by the thiol-modifying reagent N-ethylmaleimide (NEM). Involved in mercuric ion uptake and binding. MerC-mediated Hg(2+) uptake does not require MerP. The protein is Mercuric transport protein MerC of Shigella flexneri.